A 360-amino-acid chain; its full sequence is Phenylalanine--tRNA ligase alpha subunit (360 aa).

Position 260 (glutamate 260) interacts with Mg(2+).

This sequence belongs to the class-II aminoacyl-tRNA synthetase family. Phe-tRNA synthetase alpha subunit type 1 subfamily. As to quaternary structure, tetramer of two alpha and two beta subunits. Mg(2+) serves as cofactor.

It is found in the cytoplasm. The catalysed reaction is tRNA(Phe) + L-phenylalanine + ATP = L-phenylalanyl-tRNA(Phe) + AMP + diphosphate + H(+). The sequence is that of Phenylalanine--tRNA ligase alpha subunit from Methylocella silvestris (strain DSM 15510 / CIP 108128 / LMG 27833 / NCIMB 13906 / BL2).